The primary structure comprises 597 residues: FERM domain-containing protein 3 (597 aa).

The region spanning 32 to 312 (MRCTIRLLDD…ENQAFYKYAK (281 aa)) is the FERM domain. Residues 409-435 (SAPLISSSPVKAAQEYEDPPSEEEDKI) are disordered. The segment covering 423-432 (EYEDPPSEEE) has biased composition (acidic residues). Residues 531–551 (LLVVGLGLLLFVFPLLLLLLE) form a helical membrane-spanning segment.

The protein resides in the membrane. In terms of biological role, putative tumor suppressor gene that may be implicated in the origin and progression of lung cancer. In Pongo abelii (Sumatran orangutan), this protein is FERM domain-containing protein 3 (FRMD3).